We begin with the raw amino-acid sequence, 273 residues long: Undecaprenyl-diphosphatase (273 aa).

7 helical membrane-spanning segments follow: residues 54–74 (LGSI…LIGI), 90–110 (LTLI…LVFH), 116–136 (LFNP…LIAA), 156–178 (QAFM…SGAT), 190–210 (YAAS…ATVL), 222–242 (ADIP…LIAI), and 252–272 (ISFI…YVVF).

Belongs to the UppP family.

The protein resides in the cell inner membrane. It carries out the reaction di-trans,octa-cis-undecaprenyl diphosphate + H2O = di-trans,octa-cis-undecaprenyl phosphate + phosphate + H(+). Its function is as follows. Catalyzes the dephosphorylation of undecaprenyl diphosphate (UPP). Confers resistance to bacitracin. The chain is Undecaprenyl-diphosphatase from Salmonella paratyphi A (strain ATCC 9150 / SARB42).